Consider the following 203-residue polypeptide: Holliday junction branch migration complex subunit RuvA (203 aa).

The domain I stretch occupies residues 1 to 63 (MIGQLSGKVD…EEHIHLYGFL (63 aa)). Positions 64-142 (TLEEKIFFNL…KISSGSAIIK (79 aa)) are domain II. A flexible linker region spans residues 143 to 149 (ESLNIKN). Positions 150 to 203 (ITPVASNEVIKALVNLGFSRFEAQNAVQGIITQNPEISIDELIKTALKNRNSNF) are domain III.

Belongs to the RuvA family. As to quaternary structure, homotetramer. Forms an RuvA(8)-RuvB(12)-Holliday junction (HJ) complex. HJ DNA is sandwiched between 2 RuvA tetramers; dsDNA enters through RuvA and exits via RuvB. An RuvB hexamer assembles on each DNA strand where it exits the tetramer. Each RuvB hexamer is contacted by two RuvA subunits (via domain III) on 2 adjacent RuvB subunits; this complex drives branch migration. In the full resolvosome a probable DNA-RuvA(4)-RuvB(12)-RuvC(2) complex forms which resolves the HJ.

It localises to the cytoplasm. Functionally, the RuvA-RuvB-RuvC complex processes Holliday junction (HJ) DNA during genetic recombination and DNA repair, while the RuvA-RuvB complex plays an important role in the rescue of blocked DNA replication forks via replication fork reversal (RFR). RuvA specifically binds to HJ cruciform DNA, conferring on it an open structure. The RuvB hexamer acts as an ATP-dependent pump, pulling dsDNA into and through the RuvAB complex. HJ branch migration allows RuvC to scan DNA until it finds its consensus sequence, where it cleaves and resolves the cruciform DNA. The protein is Holliday junction branch migration complex subunit RuvA of Rickettsia conorii (strain ATCC VR-613 / Malish 7).